Reading from the N-terminus, the 462-residue chain is Argininosuccinate lyase (462 aa).

This sequence belongs to the lyase 1 family. Argininosuccinate lyase subfamily.

The protein resides in the cytoplasm. It carries out the reaction 2-(N(omega)-L-arginino)succinate = fumarate + L-arginine. It participates in amino-acid biosynthesis; L-arginine biosynthesis; L-arginine from L-ornithine and carbamoyl phosphate: step 3/3. The sequence is that of Argininosuccinate lyase from Exiguobacterium sp. (strain ATCC BAA-1283 / AT1b).